A 488-amino-acid polypeptide reads, in one-letter code: Probable aldehyde dehydrogenase (488 aa).

Position 240 to 245 (240 to 245 (GSSVTG)) interacts with NAD(+). Residues Glu262 and Cys296 contribute to the active site.

This sequence belongs to the aldehyde dehydrogenase family.

The enzyme catalyses an aldehyde + NAD(+) + H2O = a carboxylate + NADH + 2 H(+). Its function is as follows. Involved in an alpha-terpineol oxidation system. This is Probable aldehyde dehydrogenase (terPE) from Pseudomonas sp.